The following is a 236-amino-acid chain: EF-hand domain-containing protein D1 (236 aa).

Residues 1–48 (MASEELASKLQRRLQWEEGDSGLQPAPGAAPDPEPQPQPPAWAPTARA) form a disordered region. The span at 28–42 (GAAPDPEPQPQPPAW) shows a compositional bias: pro residues. EF-hand domains follow at residues 87–122 (RLIKDLESMFKLYDAGRDGFIDLMELKLMMEKLGAP) and 123–158 (QTHLGLKSMIKEVDEDFDGKLSFREFLLIFHKAAAG). Ca(2+) is bound by residues Asp-100, Asp-104, Glu-111, Asp-136, Asp-138, Asp-140, Lys-142, and Glu-147.

It localises to the mitochondrion inner membrane. Functionally, acts as a calcium sensor for mitochondrial flash (mitoflash) activation, an event characterized by stochastic bursts of superoxide production. May play a role in neuronal differentiation. The polypeptide is EF-hand domain-containing protein D1 (EFHD1) (Bos taurus (Bovine)).